The chain runs to 457 residues: SH3 domain-binding protein 5 (457 aa).

A compositionally biased stretch (basic and acidic residues) spans 1–12 (MDTALKRSRSEE). Positions 1–68 (MDTALKRSRS…DDINRRETEL (68 aa)) are disordered. The segment covering 25–43 (EKEEEEERMEQGLEEEEEV) has biased composition (acidic residues). The interval 33–267 (MEQGLEEEEE…EIHERRRSNA (235 aa)) is sufficient for interaction with RAB11A and for guanine nucleotide exchange activity. The segment covering 44–53 (DPRIQGELEK) has biased composition (basic and acidic residues). 4 coiled-coil regions span residues 46–92 (RIQG…LAKK), 99–147 (DSKP…RLLE), 156–202 (AWQE…LEKK), and 213–257 (YFEL…RISD). Positions 308–319 (NCGNLVSEDDSE) are enriched in acidic residues. Residues 308 to 347 (NCGNLVSEDDSETQSVSSFSSGPTSPSEMPDQFPAVARPG) are disordered. The span at 322-334 (SVSSFSSGPTSPS) shows a compositional bias: low complexity. Serine 353 is modified (phosphoserine; by MAPK12 and MAPK9). The interval 371-427 (SECSGASSPECEVERGDRAEGAENKMSDKANNNRVLSSTSAGGGRSRSQSSTSLEGQ) is disordered. A phosphoserine mark is found at serine 377 and serine 378. Over residues 382-398 (EVERGDRAEGAENKMSD) the composition is skewed to basic and acidic residues. The span at 406–427 (LSSTSAGGGRSRSQSSTSLEGQ) shows a compositional bias: low complexity. A Phosphoserine modification is found at serine 420. A Phosphoserine; by MAPK12 modification is found at serine 423.

The protein belongs to the SH3BP5 family. Interacts with BTK. Interacts with all isoforms of MAPK8, MAPK9, MAPK10 and MAPK12. Interacts with GDP-bound and nucleotide-free forms of RAB11A.

Its subcellular location is the cytoplasmic vesicle membrane. It localises to the mitochondrion. In terms of biological role, functions as a guanine nucleotide exchange factor (GEF) with specificity for RAB11A and RAB25. Inhibits the auto- and transphosphorylation activity of BTK. Plays a negative regulatory role in BTK-related cytoplasmic signaling in B-cells. May be involved in BCR-induced apoptotic cell death. This chain is SH3 domain-binding protein 5 (Sh3bp5), found in Rattus norvegicus (Rat).